The primary structure comprises 465 residues: Siroheme synthase (465 aa).

The interval 1–203 is precorrin-2 dehydrogenase /sirohydrochlorin ferrochelatase; it reads MDFLPLFHSL…GRPAEAERLL (203 aa). NAD(+) contacts are provided by residues 22 to 23 and 43 to 44; these read EV and PQ. The residue at position 128 (Ser-128) is a Phosphoserine. The uroporphyrinogen-III C-methyltransferase stretch occupies residues 217 to 465; sequence GEVYLVGAGP…AWFEGAREDA (249 aa). Pro-226 contributes to the S-adenosyl-L-methionine binding site. Catalysis depends on Asp-249, which acts as the Proton acceptor. Lys-271 serves as the catalytic Proton donor. Residues 302–304, Ile-307, 332–333, Met-384, and Gly-413 each bind S-adenosyl-L-methionine; these read GGD and TA.

This sequence in the N-terminal section; belongs to the precorrin-2 dehydrogenase / sirohydrochlorin ferrochelatase family. In the C-terminal section; belongs to the precorrin methyltransferase family.

The enzyme catalyses uroporphyrinogen III + 2 S-adenosyl-L-methionine = precorrin-2 + 2 S-adenosyl-L-homocysteine + H(+). The catalysed reaction is precorrin-2 + NAD(+) = sirohydrochlorin + NADH + 2 H(+). It carries out the reaction siroheme + 2 H(+) = sirohydrochlorin + Fe(2+). It functions in the pathway cofactor biosynthesis; adenosylcobalamin biosynthesis; precorrin-2 from uroporphyrinogen III: step 1/1. Its pathway is cofactor biosynthesis; adenosylcobalamin biosynthesis; sirohydrochlorin from precorrin-2: step 1/1. The protein operates within porphyrin-containing compound metabolism; siroheme biosynthesis; precorrin-2 from uroporphyrinogen III: step 1/1. It participates in porphyrin-containing compound metabolism; siroheme biosynthesis; siroheme from sirohydrochlorin: step 1/1. It functions in the pathway porphyrin-containing compound metabolism; siroheme biosynthesis; sirohydrochlorin from precorrin-2: step 1/1. Multifunctional enzyme that catalyzes the SAM-dependent methylations of uroporphyrinogen III at position C-2 and C-7 to form precorrin-2 via precorrin-1. Then it catalyzes the NAD-dependent ring dehydrogenation of precorrin-2 to yield sirohydrochlorin. Finally, it catalyzes the ferrochelation of sirohydrochlorin to yield siroheme. The protein is Siroheme synthase of Pseudomonas aeruginosa (strain LESB58).